The following is a 342-amino-acid chain: Ribosomal RNA small subunit methyltransferase C (342 aa).

The protein belongs to the methyltransferase superfamily. RsmC family. In terms of assembly, monomer.

It is found in the cytoplasm. It carries out the reaction guanosine(1207) in 16S rRNA + S-adenosyl-L-methionine = N(2)-methylguanosine(1207) in 16S rRNA + S-adenosyl-L-homocysteine + H(+). In terms of biological role, specifically methylates the guanine in position 1207 of 16S rRNA in the 30S particle. This is Ribosomal RNA small subunit methyltransferase C from Salmonella gallinarum (strain 287/91 / NCTC 13346).